Consider the following 322-residue polypeptide: NADH-quinone oxidoreductase subunit H (322 aa).

The next 8 membrane-spanning stretches (helical) occupy residues 12 to 32 (IGKA…MSFI), 79 to 99 (IFVL…AVVP), 111 to 131 (VGLL…LFAG), 151 to 171 (LSYE…TGSF), 183 to 203 (LWNV…GVAV), 234 to 254 (FFVG…TLFF), 262 to 282 (LPPF…FILL), and 301 to 321 (VCLP…LMNA).

It belongs to the complex I subunit 1 family. As to quaternary structure, NDH-1 is composed of 14 different subunits. Subunits NuoA, H, J, K, L, M, N constitute the membrane sector of the complex.

It localises to the cell inner membrane. It carries out the reaction a quinone + NADH + 5 H(+)(in) = a quinol + NAD(+) + 4 H(+)(out). Its function is as follows. NDH-1 shuttles electrons from NADH, via FMN and iron-sulfur (Fe-S) centers, to quinones in the respiratory chain. The immediate electron acceptor for the enzyme in this species is believed to be ubiquinone. Couples the redox reaction to proton translocation (for every two electrons transferred, four hydrogen ions are translocated across the cytoplasmic membrane), and thus conserves the redox energy in a proton gradient. This subunit may bind ubiquinone. The sequence is that of NADH-quinone oxidoreductase subunit H from Aeromonas hydrophila subsp. hydrophila (strain ATCC 7966 / DSM 30187 / BCRC 13018 / CCUG 14551 / JCM 1027 / KCTC 2358 / NCIMB 9240 / NCTC 8049).